The chain runs to 294 residues: 2-dehydropantoate 2-reductase (294 aa).

NADP(+) is bound by residues 10–15 (GAGALG), Arg34, Lys74, Asn98, and Ala122. Lys178 serves as the catalytic Proton donor. Substrate is bound by residues Lys178, Asn182, Asn186, Asn196, and 243–246 (NRSS). NADP(+) is bound at residue Glu258.

This sequence belongs to the ketopantoate reductase family.

It is found in the cytoplasm. The enzyme catalyses (R)-pantoate + NAD(+) = 2-dehydropantoate + NADH + H(+). It carries out the reaction (R)-pantoate + NADP(+) = 2-dehydropantoate + NADPH + H(+). The protein operates within cofactor biosynthesis; coenzyme A biosynthesis. Catalyzes the NAD(P)H-dependent reduction of ketopantoate into pantoic acid. This Archaeoglobus fulgidus (strain ATCC 49558 / DSM 4304 / JCM 9628 / NBRC 100126 / VC-16) protein is 2-dehydropantoate 2-reductase.